The following is a 65-amino-acid chain: Large ribosomal subunit protein bL35 (65 aa).

Positions 1 to 26 (MPKIKTLRSAAKRFKKTESGKFKRKQ) are disordered.

Belongs to the bacterial ribosomal protein bL35 family.

This is Large ribosomal subunit protein bL35 from Buchnera aphidicola subsp. Baizongia pistaciae (strain Bp).